The primary structure comprises 353 residues: Probable G-protein coupled receptor 139 (353 aa).

Over 1 to 29 (MEHTHAHLAANSSLSWWSPGSACGLGFVP) the chain is Extracellular. N-linked (GlcNAc...) asparagine glycosylation is present at Asn-11. The chain crosses the membrane as a helical span at residues 30–50 (VVYYSLLLCLGLPANILTVII). Residues 51-65 (LSQLVARRQKSSYNY) lie on the Cytoplasmic side of the membrane. Residues 66 to 86 (LLALAAADILVLFFIVFVDFL) traverse the membrane as a helical segment. Residues 87–102 (LEDFILNMQMPQVPDK) lie on the Extracellular side of the membrane. Residues 103–123 (IIEVLEFSSIHTSIWITVPLT) form a helical membrane-spanning segment. At 124 to 148 (IDRYIAVCHPLKYHTVSYPARTRKV) the chain is on the cytoplasmic side. Residues 149-169 (IVSVYITCFLTSIPYYWWPNI) form a helical membrane-spanning segment. The Extracellular portion of the chain corresponds to 170 to 181 (WTEDYISTSVHH). A helical membrane pass occupies residues 182 to 202 (VLIWIHCFTVYLVPCSIFFIL). Residues 203-228 (NSIIVYKLRRKSNFRLRGYSTGKTTA) lie on the Cytoplasmic side of the membrane. Residues 229-249 (ILFTITSIFATLWAPRIIMIL) form a helical membrane-spanning segment. The Extracellular portion of the chain corresponds to 250 to 268 (YHLYGAPIQNRWLVHIMSD). The helical transmembrane segment at 269-289 (IANMLALLNTAINFFLYCFIS) threads the bilayer. The Cytoplasmic segment spans residues 290–353 (KRFRTMAAAT…KNGKPIKVSP (64 aa)).

This sequence belongs to the G-protein coupled receptor 1 family. Expressed almost exclusively in the brain. Detected at very low levels in the peripheral tissues.

The protein resides in the cell membrane. Orphan receptor. Seems to act through a G(q/11)-mediated pathway. In Homo sapiens (Human), this protein is Probable G-protein coupled receptor 139 (GPR139).